Reading from the N-terminus, the 446-residue chain is Phosphoglucosamine mutase (446 aa).

Residue serine 101 is the Phosphoserine intermediate of the active site. Positions 101, 240, 242, and 244 each coordinate Mg(2+). Serine 101 carries the post-translational modification Phosphoserine.

This sequence belongs to the phosphohexose mutase family. The cofactor is Mg(2+). In terms of processing, activated by phosphorylation.

The catalysed reaction is alpha-D-glucosamine 1-phosphate = D-glucosamine 6-phosphate. Its function is as follows. Catalyzes the conversion of glucosamine-6-phosphate to glucosamine-1-phosphate. The chain is Phosphoglucosamine mutase from Pseudomonas putida (strain W619).